We begin with the raw amino-acid sequence, 417 residues long: 4-hydroxy-3-methylbut-2-en-1-yl diphosphate synthase (flavodoxin) (417 aa).

Positions 304, 307, 350, and 357 each coordinate [4Fe-4S] cluster.

This sequence belongs to the IspG family. It depends on [4Fe-4S] cluster as a cofactor.

The enzyme catalyses (2E)-4-hydroxy-3-methylbut-2-enyl diphosphate + oxidized [flavodoxin] + H2O + 2 H(+) = 2-C-methyl-D-erythritol 2,4-cyclic diphosphate + reduced [flavodoxin]. The protein operates within isoprenoid biosynthesis; isopentenyl diphosphate biosynthesis via DXP pathway; isopentenyl diphosphate from 1-deoxy-D-xylulose 5-phosphate: step 5/6. Its function is as follows. Converts 2C-methyl-D-erythritol 2,4-cyclodiphosphate (ME-2,4cPP) into 1-hydroxy-2-methyl-2-(E)-butenyl 4-diphosphate. The polypeptide is 4-hydroxy-3-methylbut-2-en-1-yl diphosphate synthase (flavodoxin) (Sinorhizobium medicae (strain WSM419) (Ensifer medicae)).